We begin with the raw amino-acid sequence, 227 residues long: 7-cyano-7-deazaguanine synthase (227 aa).

9–19 is an ATP binding site; it reads LSGGLDSATVL. Residues C189, C199, C202, and C205 each contribute to the Zn(2+) site.

Belongs to the QueC family. Zn(2+) is required as a cofactor.

It carries out the reaction 7-carboxy-7-deazaguanine + NH4(+) + ATP = 7-cyano-7-deazaguanine + ADP + phosphate + H2O + H(+). The protein operates within purine metabolism; 7-cyano-7-deazaguanine biosynthesis. Functionally, catalyzes the ATP-dependent conversion of 7-carboxy-7-deazaguanine (CDG) to 7-cyano-7-deazaguanine (preQ(0)). This is 7-cyano-7-deazaguanine synthase from Cupriavidus metallidurans (strain ATCC 43123 / DSM 2839 / NBRC 102507 / CH34) (Ralstonia metallidurans).